We begin with the raw amino-acid sequence, 195 residues long: Adenylate kinase (195 aa).

11 to 16 (GAGKGT) contacts ATP. The tract at residues 31–60 (STGDIFRAAVRNQTPLGQQVQAYLDSGRLV) is NMP. Residues Thr32, Arg37, 58–60 (RLV), 86–89 (GFPR), and Gln93 contribute to the AMP site. The interval 127-137 (LRAEKESRKDD) is LID. Residue Arg128 participates in ATP binding. AMP-binding residues include Arg134 and Arg145. Gln173 contributes to the ATP binding site.

This sequence belongs to the adenylate kinase family. In terms of assembly, monomer.

The protein resides in the cytoplasm. It carries out the reaction AMP + ATP = 2 ADP. It participates in purine metabolism; AMP biosynthesis via salvage pathway; AMP from ADP: step 1/1. In terms of biological role, catalyzes the reversible transfer of the terminal phosphate group between ATP and AMP. Plays an important role in cellular energy homeostasis and in adenine nucleotide metabolism. The protein is Adenylate kinase of Cyanothece sp. (strain PCC 7425 / ATCC 29141).